A 577-amino-acid polypeptide reads, in one-letter code: MFS-type transporter CPUR_05422 (577 aa).

The tract at residues M1–P49 is disordered. Basic and acidic residues predominate over residues D19–V34. The segment covering P38–P47 has biased composition (pro residues). 14 consecutive transmembrane segments (helical) span residues S52–V72, D93–G113, V123–P143, V157–A177, G184–F204, W212–F232, I249–L269, I285–C305, F326–W346, G359–L379, I383–L403, V416–L436, M449–G469, and V525–W545. The segment at P554–T577 is disordered.

The protein belongs to the major facilitator superfamily. TCR/Tet family.

The protein resides in the membrane. Its function is as follows. MFS-type transporter; part of the ergochrome gene cluster responsible for the typical purple-black color of the ergot sclerotia. The ergochrome gene cluster produces several ergot pigments including the yellow ergochrome secalonic acid and its derivatives, as well as the red anthraquinones endocrocin and clavorubin. This Claviceps purpurea (strain 20.1) (Ergot fungus) protein is MFS-type transporter CPUR_05422.